A 158-amino-acid chain; its full sequence is Class 10 plant pathogenesis-related protein 2D (158 aa).

Aspartate 8 contributes to the trans-zeatin binding site. Ca(2+) is bound by residues proline 32, valine 35, and isoleucine 38. Trans-zeatin-binding residues include glutamate 60, histidine 69, tyrosine 81, and tyrosine 83.

The protein belongs to the BetVI family.

It localises to the cytoplasm. It is found in the cytosol. Functionally, class II ribonuclease (RNase). Binds to cytokinins. Interacts with melatonin. The chain is Class 10 plant pathogenesis-related protein 2D from Lupinus luteus (European yellow lupine).